Here is a 360-residue protein sequence, read N- to C-terminus: Phosphoserine aminotransferase (360 aa).

Arginine 42 contacts L-glutamate. Pyridoxal 5'-phosphate is bound by residues 76–77, tryptophan 102, threonine 152, aspartate 172, and glutamine 195; that span reads AS. Lysine 196 is modified (N6-(pyridoxal phosphate)lysine). 237-238 contributes to the pyridoxal 5'-phosphate binding site; it reads NT.

It belongs to the class-V pyridoxal-phosphate-dependent aminotransferase family. SerC subfamily. As to quaternary structure, homodimer. The cofactor is pyridoxal 5'-phosphate.

It is found in the cytoplasm. It catalyses the reaction O-phospho-L-serine + 2-oxoglutarate = 3-phosphooxypyruvate + L-glutamate. The catalysed reaction is 4-(phosphooxy)-L-threonine + 2-oxoglutarate = (R)-3-hydroxy-2-oxo-4-phosphooxybutanoate + L-glutamate. Its pathway is amino-acid biosynthesis; L-serine biosynthesis; L-serine from 3-phospho-D-glycerate: step 2/3. Functionally, catalyzes the reversible conversion of 3-phosphohydroxypyruvate to phosphoserine and of 3-hydroxy-2-oxo-4-phosphonooxybutanoate to phosphohydroxythreonine. The sequence is that of Phosphoserine aminotransferase from Bacillus thuringiensis subsp. konkukian (strain 97-27).